The primary structure comprises 146 residues: Leghemoglobin 1 (146 aa).

The 145-residue stretch at 2-146 (GFTEKQEALV…LAAAIKKAMG (145 aa)) folds into the Globin domain. Tyr-29 is subject to Nitrated tyrosine. Ser-44 is a heme b binding site. Ser-44 carries the phosphoserine modification. Residue His-61 participates in O2 binding. Positions 64, 93, and 96 each coordinate heme b. Tyr-134 carries the post-translational modification Nitrated tyrosine.

This sequence belongs to the plant globin family. In terms of assembly, monomer. Nitrated in effective nodules and particularly in hypoxic conditions; this mechanism may play a protective role in the symbiosis by buffering toxic peroxynitrite NO(2)(-). Nitration level decrease during nodule senescence. Post-translationally, phosphorylation at Ser-44 disrupts the molecular environment of its porphyrin ring oxygen binding pocket, thus leading to a reduced oxygen consumption and to the delivery of oxygen O(2) to symbiosomes. In terms of tissue distribution, root nodules.

The protein localises to the cytoplasm. The protein resides in the cytosol. It is found in the nucleus. Its function is as follows. Leghemoglobin that reversibly binds oxygen O(2) through a pentacoordinated heme iron. In root nodules, facilitates the diffusion of oxygen to the bacteroids while preventing the bacterial nitrogenase from being inactivated by buffering dioxygen, nitric oxide and carbon monoxide, and promoting the formation of reactive oxygen species (ROS, e.g. H(2)O(2)). This role is essential for symbiotic nitrogen fixation (SNF). The chain is Leghemoglobin 1 from Medicago truncatula (Barrel medic).